A 417-amino-acid chain; its full sequence is CinA-like protein (417 aa).

It belongs to the CinA family.

The protein is CinA-like protein of Synechococcus sp. (strain RCC307).